A 590-amino-acid polypeptide reads, in one-letter code: Shugoshin (590 aa).

A disordered region spans residues 1–20 (MPKRKIAPNKESSRRTVSHD). Basic and acidic residues predominate over residues 11 to 20 (ESSRRTVSHD). Positions 25–86 (QIQEFQNLMD…QENVTLRSKT (62 aa)) form a coiled coil. Disordered stretches follow at residues 133–235 (LRTM…QVEE), 291–337 (PSNP…HSMK), and 411–550 (RNRE…NSNI). A compositionally biased stretch (basic and acidic residues) spans 173–185 (SFNKDDGPDLEPK). Over residues 302-326 (PSATLPTTTSDASTVYPSSSSSTNS) the composition is skewed to low complexity. Residues 328-337 (PKTKIKHSMK) show a composition bias toward basic residues. The segment covering 448-459 (KKTEDEIHEDTA) has biased composition (basic and acidic residues). Residues 513-526 (IVNNLSDENSTTRP) are compositionally biased toward polar residues. The segment covering 527–550 (SKSSKGTSNNNNNYNNFDNNNSNI) has biased composition (low complexity).

The protein belongs to the shugoshin family. Post-translationally, ubiquitinated by the anaphase promoting complex (APC) at the onset of anaphase, conducting to its degradation.

It localises to the chromosome. The protein localises to the centromere. It is found in the kinetochore. The protein resides in the cytoplasm. Its subcellular location is the cytoskeleton. It localises to the spindle pole. Functionally, plays a central role in chromosome cohesion during mitosis and meiosis divisions by preventing premature dissociation of cohesin complex from centromeres after prophase, when most of cohesin complex dissociates from chromosomes arms. Probably act by protecting REC8 and RAD21 from separase degradation during anaphase. Also acts as a spindle checkpoint component required for sensing tension between sister chromatids during mitosis, its degradation when they separate preventing cell cycle arrest and chromosome loss in anaphase, a time when sister chromatids are no longer under tension. This Saccharomyces cerevisiae (strain ATCC 204508 / S288c) (Baker's yeast) protein is Shugoshin (SGO1).